Consider the following 166-residue polypeptide: Large ribosomal subunit protein uL10 (166 aa).

The protein belongs to the universal ribosomal protein uL10 family. Part of the ribosomal stalk of the 50S ribosomal subunit. The N-terminus interacts with L11 and the large rRNA to form the base of the stalk. The C-terminus forms an elongated spine to which L12 dimers bind in a sequential fashion forming a multimeric L10(L12)X complex.

Functionally, forms part of the ribosomal stalk, playing a central role in the interaction of the ribosome with GTP-bound translation factors. The protein is Large ribosomal subunit protein uL10 of Streptococcus sanguinis (strain SK36).